The primary structure comprises 345 residues: HTH-type transcriptional regulator reg1 (345 aa).

The HTH lacI-type domain occupies 1–58 (MTTRLADIAAQAGVSEATVSRVLNGKPGVAATTRQSVLAALDVLGYERPVRLRRRSAG). Residues 5 to 24 (LADIAAQAGVSEATVSRVLN) constitute a DNA-binding region (H-T-H motif).

Transcription repressor involved in control of expression of alpha-amylase and chitinase genes and of actinorhodin production. This is HTH-type transcriptional regulator reg1 (reg1) from Streptomyces lividans.